The chain runs to 247 residues: Protein McbF (247 aa).

In terms of domain architecture, ABC transporter spans 6 to 234 (LEINSLSFSY…NNETTQKRHL (229 aa)). Residue 40-47 (GENPAGKT) coordinates ATP.

Belongs to the ABC transporter superfamily.

Its function is as follows. Together with two further proteins McbE and McbG this protein causes immunity to the peptide antibiotic microcin B17, which inhibits DNA replication in enterobacteriaceae. Immunity is determined by two different mechanisms. McbE is involved in the production of extracellular MccB17 and, in a complex with mcbf it also serves as 'pump' for the export of active MccB17 from the cytoplasm to the periplasmic space. This is Protein McbF (mcbF) from Escherichia coli.